We begin with the raw amino-acid sequence, 72 residues long: Translation initiation factor IF-1 (72 aa).

Positions 1–72 (MAKEDTIQMQ…TRARIVFRAR (72 aa)) constitute an S1-like domain.

The protein belongs to the IF-1 family. In terms of assembly, component of the 30S ribosomal translation pre-initiation complex which assembles on the 30S ribosome in the order IF-2 and IF-3, IF-1 and N-formylmethionyl-tRNA(fMet); mRNA recruitment can occur at any time during PIC assembly.

It is found in the cytoplasm. Its function is as follows. One of the essential components for the initiation of protein synthesis. Stabilizes the binding of IF-2 and IF-3 on the 30S subunit to which N-formylmethionyl-tRNA(fMet) subsequently binds. Helps modulate mRNA selection, yielding the 30S pre-initiation complex (PIC). Upon addition of the 50S ribosomal subunit IF-1, IF-2 and IF-3 are released leaving the mature 70S translation initiation complex. In Neisseria gonorrhoeae (strain ATCC 700825 / FA 1090), this protein is Translation initiation factor IF-1.